Reading from the N-terminus, the 360-residue chain is Photosystem II protein D1 (360 aa).

The next 3 membrane-spanning stretches (helical) occupy residues 30–47 (YVGW…AAAA), 119–134 (HFLI…QWEL), and 143–157 (WICV…AAFA). H119 serves as a coordination point for chlorophyll a. A pheophytin a-binding site is contributed by Y127. [CaMn4O5] cluster-binding residues include D171 and E190. A helical membrane pass occupies residues 198–219 (FHMAGVAGMFGGSLFSAMHGSL). Position 199 (H199) interacts with chlorophyll a. Residues H216 and 265-266 (SF) contribute to the a quinone site. Residue H216 participates in Fe cation binding. H273 is a binding site for Fe cation. A helical membrane pass occupies residues 275–289 (FLAVFPVVCVWLTSM). 4 residues coordinate [CaMn4O5] cluster: H333, E334, D343, and A345. The propeptide occupies 346-360 (AAESTTVALTAPAIG).

The protein belongs to the reaction center PufL/M/PsbA/D family. In terms of assembly, PSII is composed of 1 copy each of membrane proteins PsbA, PsbB, PsbC, PsbD, PsbE, PsbF, PsbH, PsbI, PsbJ, PsbK, PsbL, PsbM, PsbT, PsbX, PsbY, Psb30/Ycf12, peripheral proteins PsbO, CyanoQ (PsbQ), PsbU, PsbV and a large number of cofactors. It forms dimeric complexes. The cofactor is The D1/D2 heterodimer binds P680, chlorophylls that are the primary electron donor of PSII, and subsequent electron acceptors. It shares a non-heme iron and each subunit binds pheophytin, quinone, additional chlorophylls, carotenoids and lipids. D1 provides most of the ligands for the Mn4-Ca-O5 cluster of the oxygen-evolving complex (OEC). There is also a Cl(-1) ion associated with D1 and D2, which is required for oxygen evolution. The PSII complex binds additional chlorophylls, carotenoids and specific lipids.. Post-translationally, tyr-162 forms a radical intermediate that is referred to as redox-active TyrZ, YZ or Y-Z. In terms of processing, C-terminally processed by CtpA; processing is essential to allow assembly of the oxygen-evolving complex and thus photosynthetic growth.

It is found in the cellular thylakoid membrane. It carries out the reaction 2 a plastoquinone + 4 hnu + 2 H2O = 2 a plastoquinol + O2. In terms of biological role, photosystem II (PSII) is a light-driven water:plastoquinone oxidoreductase that uses light energy to abstract electrons from H(2)O, generating O(2) and a proton gradient subsequently used for ATP formation. It consists of a core antenna complex that captures photons, and an electron transfer chain that converts photonic excitation into a charge separation. The D1/D2 (PsbA/PsbD) reaction center heterodimer binds P680, the primary electron donor of PSII as well as several subsequent electron acceptors. The chain is Photosystem II protein D1 from Prochlorococcus marinus (strain MIT 9515).